The following is a 202-amino-acid chain: MSEEALGELSGYIRERLGDAIEEANLAYGELTLCVPVASLIGVLTLLRDDVQCQFVNLTDISGVDYPQREKRFDVVYQLLSPRQNQRIRVKVQADEDTLVPSAVPVFFGAEWYEREAYDMYGILFSGHPDLRRILTDYGFEGHPLRKDFPLTGFVEVRYNDELKRVVYEPVQLRQEFRNFDFLSPWEGTDYVLPGDEKAKTN.

Belongs to the complex I 30 kDa subunit family. As to quaternary structure, NDH-1 is composed of 14 different subunits. Subunits NuoB, C, D, E, F, and G constitute the peripheral sector of the complex.

Its subcellular location is the cell inner membrane. The enzyme catalyses a quinone + NADH + 5 H(+)(in) = a quinol + NAD(+) + 4 H(+)(out). Its function is as follows. NDH-1 shuttles electrons from NADH, via FMN and iron-sulfur (Fe-S) centers, to quinones in the respiratory chain. The immediate electron acceptor for the enzyme in this species is believed to be ubiquinone. Couples the redox reaction to proton translocation (for every two electrons transferred, four hydrogen ions are translocated across the cytoplasmic membrane), and thus conserves the redox energy in a proton gradient. The polypeptide is NADH-quinone oxidoreductase subunit C (Brucella abortus (strain 2308)).